A 619-amino-acid polypeptide reads, in one-letter code: Zinc finger protein 131 (619 aa).

The BTB domain occupies 34–98 (TDITLIVDGH…TYTAKLMIQG (65 aa)). The short motif at 137 to 148 (TGKNEAKKRKIA) is the Nuclear localization signal 1 element. The residue at position 231 (Ser231) is a Phosphoserine. C2H2-type zinc fingers lie at residues 261–283 (FHCE…MKSH), 288–311 (FKCE…NCYH), and 328–350 (HICQ…LRKH). Residues Lys289 and Lys295 each participate in a glycyl lysine isopeptide (Lys-Gly) (interchain with G-Cter in SUMO2) cross-link. Residues 317–328 (VSKKQRTGKKIH) carry the Nuclear localization signal 2 motif. Residues 356 to 381 (FECSNCHERFARNSTLKCHLTACQTG) form a C2H2-type 4; degenerate zinc finger. C2H2-type zinc fingers lie at residues 392 to 414 (YECQ…LVIH) and 420 to 443 (NHCT…SDAH). Composition is skewed to basic and acidic residues over residues 574–587 (QEER…AAME) and 595–612 (LETK…ENDR). The tract at residues 574-619 (QEEREPNHADAAMEEHEDAEGLETKPSEYSQARKTENDRTSLPVLE) is disordered. Lys598 is covalently cross-linked (Glycyl lysine isopeptide (Lys-Gly) (interchain with G-Cter in SUMO)).

Belongs to the krueppel C2H2-type zinc-finger protein family. Monosumoylated at Lys-598 by CBX4 and UHRF2. Sumoylation may potentiate ZNF131 inhibition of estrogen signaling. Sumoylation does not interfere with ubiquitination. Post-translationally, ubiquitinated. In terms of tissue distribution, ubiquitously expressed. Predominant expression is found in the developing central nervous system with strongest signals in the forebrain, midbrain, and hindbrain areas and in the neural tube.

The protein resides in the nucleus. In terms of biological role, may be involved in transcriptional regulation as a repressor of ESR1/ER-alpha signaling. Plays a role during development and organogenesis as well as in the function of the adult central nervous system. The polypeptide is Zinc finger protein 131 (Znf131) (Mus musculus (Mouse)).